The following is a 508-amino-acid chain: Light-independent protochlorophyllide reductase subunit B (508 aa).

A [4Fe-4S] cluster-binding site is contributed by Asp-36. The active-site Proton donor is the Asp-282. 417-418 lines the substrate pocket; it reads GL.

Belongs to the ChlB/BchB/BchZ family. In terms of assembly, protochlorophyllide reductase is composed of three subunits; BchL, BchN and BchB. Forms a heterotetramer of two BchB and two BchN subunits. [4Fe-4S] cluster is required as a cofactor.

The catalysed reaction is chlorophyllide a + oxidized 2[4Fe-4S]-[ferredoxin] + 2 ADP + 2 phosphate = protochlorophyllide a + reduced 2[4Fe-4S]-[ferredoxin] + 2 ATP + 2 H2O. It participates in porphyrin-containing compound metabolism; bacteriochlorophyll biosynthesis (light-independent). In terms of biological role, component of the dark-operative protochlorophyllide reductase (DPOR) that uses Mg-ATP and reduced ferredoxin to reduce ring D of protochlorophyllide (Pchlide) to form chlorophyllide a (Chlide). This reaction is light-independent. The NB-protein (BchN-BchB) is the catalytic component of the complex. This Methylocella silvestris (strain DSM 15510 / CIP 108128 / LMG 27833 / NCIMB 13906 / BL2) protein is Light-independent protochlorophyllide reductase subunit B.